The sequence spans 159 residues: Cyclic pyranopterin monophosphate synthase (159 aa).

Residues 75–77 and 113–114 each bind substrate; these read LCH and ME. Residue aspartate 128 is part of the active site.

The protein belongs to the MoaC family. In terms of assembly, homohexamer; trimer of dimers.

The enzyme catalyses (8S)-3',8-cyclo-7,8-dihydroguanosine 5'-triphosphate = cyclic pyranopterin phosphate + diphosphate. It participates in cofactor biosynthesis; molybdopterin biosynthesis. Functionally, catalyzes the conversion of (8S)-3',8-cyclo-7,8-dihydroguanosine 5'-triphosphate to cyclic pyranopterin monophosphate (cPMP). This chain is Cyclic pyranopterin monophosphate synthase, found in Aliivibrio salmonicida (strain LFI1238) (Vibrio salmonicida (strain LFI1238)).